The following is a 202-amino-acid chain: Holliday junction branch migration complex subunit RuvA (202 aa).

Residues 1–65 (MIAYVEGRVA…EDALELFGFS (65 aa)) are domain I. The domain II stretch occupies residues 66–144 (TWDERQTFMV…VEDLPAGLVL (79 aa)). Residues 145-155 (AGGAAPGGVFR) form a flexible linker region. The tract at residues 155-202 (RDALAGLGNLGYLEDEAAPVLKEVLKAEPDLDVAGALRAALKALARGR) is domain III.

It belongs to the RuvA family. Homotetramer. Forms an RuvA(8)-RuvB(12)-Holliday junction (HJ) complex. HJ DNA is sandwiched between 2 RuvA tetramers; dsDNA enters through RuvA and exits via RuvB. An RuvB hexamer assembles on each DNA strand where it exits the tetramer. Each RuvB hexamer is contacted by two RuvA subunits (via domain III) on 2 adjacent RuvB subunits; this complex drives branch migration. In the full resolvosome a probable DNA-RuvA(4)-RuvB(12)-RuvC(2) complex forms which resolves the HJ.

The protein localises to the cytoplasm. Its function is as follows. The RuvA-RuvB-RuvC complex processes Holliday junction (HJ) DNA during genetic recombination and DNA repair, while the RuvA-RuvB complex plays an important role in the rescue of blocked DNA replication forks via replication fork reversal (RFR). RuvA specifically binds to HJ cruciform DNA, conferring on it an open structure. The RuvB hexamer acts as an ATP-dependent pump, pulling dsDNA into and through the RuvAB complex. HJ branch migration allows RuvC to scan DNA until it finds its consensus sequence, where it cleaves and resolves the cruciform DNA. The protein is Holliday junction branch migration complex subunit RuvA of Nitratidesulfovibrio vulgaris (strain DSM 19637 / Miyazaki F) (Desulfovibrio vulgaris).